A 130-amino-acid chain; its full sequence is Small ribosomal subunit protein uS8 (130 aa).

The protein belongs to the universal ribosomal protein uS8 family. As to quaternary structure, part of the 30S ribosomal subunit.

In terms of biological role, one of the primary rRNA binding proteins, it binds directly to 16S rRNA central domain where it helps coordinate assembly of the platform of the 30S subunit. This is Small ribosomal subunit protein uS8 from Methanosphaerula palustris (strain ATCC BAA-1556 / DSM 19958 / E1-9c).